Reading from the N-terminus, the 345-residue chain is BAG family molecular chaperone regulator 1 (345 aa).

Residues 1–137 (MAQRGGARRP…STRSEEVTRE (137 aa)) form a disordered region. Over residues 68 to 80 (RRPRMKKKTRRRS) the composition is skewed to basic residues. Over residues 81 to 91 (TRSEELTRSEE) the composition is skewed to basic and acidic residues. Low complexity predominate over residues 95–114 (SEEATWSEEATQSEEATQGE). A run of 7 repeats spans residues 96 to 101 (EEATWS), 102 to 107 (EEATQS), 108 to 113 (EEATQG), 114 to 119 (EEMNRS), 120 to 125 (QEVTRD), 126 to 131 (EESTRS), and 132 to 137 (EEVTRE). A 7 X 6 AA tandem repeat of E-E-X(4) region spans residues 96–137 (EEATWSEEATQSEEATQGEEMNRSQEVTRDEESTRSEEVTRE). The segment covering 115–137 (EMNRSQEVTRDEESTRSEEVTRE) has biased composition (basic and acidic residues). The 81-residue stretch at 144–224 (LTVTVTHSNE…VMLIGKKNSP (81 aa)) folds into the Ubiquitin-like domain. An interaction with HSPA8 region spans residues 172 to 219 (DLAQVVEEVIGVPQSFQKLIFKGKSLKEMETPLSALGIQDGCRVMLIG). The segment at 216-345 (MLIGKKNSPQ…LQSTNFALAE (130 aa)) is interaction with PPP1R15A. A Phosphoserine modification is found at Ser223. A BAG domain is found at 246-326 (QLEELNKELT…AFLAECDTVE (81 aa)).

As to quaternary structure, homodimer. Forms a heteromeric complex with HSP70/HSC70. Binds to the ATPase domain of HSP/HSC70 chaperones. Isoform 1, isoform 3 and isoform 4 but not isoform 2 interact with HSPA8/HSC70. Interacts with NR3C1. Interacts with the N-terminal region of MAPRE2. Interacts with PPP1R15A. Interacts with BCL2 in an ATP-dependent manner. Isoform 2 does not interact with BCL2. Interacts with SIAH1. Interacts with HSPA8 (via NBD). Interacts with HSPA1A (via NBD) and HSPA1B (via NBD). Interacts with SIAH2. Interacts with ESR1; the interaction is promoted in the absence of estradiol (17-beta-estradiol/E2). Post-translationally, ubiquitinated; mediated by SIAH1 or SIAH2 and leading to its subsequent proteasomal degradation. In terms of tissue distribution, isoform 4 is the most abundantly expressed isoform. It is ubiquitously expressed throughout most tissues, except the liver, colon, breast and uterine myometrium. Isoform 1 is expressed in the ovary and testis. Isoform 4 is expressed in several types of tumor cell lines, and at consistently high levels in leukemia and lymphoma cell lines. Isoform 1 is expressed in the prostate, breast and leukemia cell lines. Isoform 3 is the least abundant isoform in tumor cell lines (at protein level).

The protein localises to the nucleus. It localises to the cytoplasm. Co-chaperone for HSP70 and HSC70 chaperone proteins. Acts as a nucleotide-exchange factor (NEF) promoting the release of ADP from the HSP70 and HSC70 proteins thereby triggering client/substrate protein release. Nucleotide release is mediated via its binding to the nucleotide-binding domain (NBD) of HSPA8/HSC70 where as the substrate release is mediated via its binding to the substrate-binding domain (SBD) of HSPA8/HSC70. Inhibits the pro-apoptotic function of PPP1R15A, and has anti-apoptotic activity. Markedly increases the anti-cell death function of BCL2 induced by various stimuli. Involved in the STUB1-mediated proteasomal degradation of ESR1 in response to age-related circulating estradiol (17-beta-estradiol/E2) decline, thereby promotes neuronal apoptosis in response to ischemic reperfusion injury. The sequence is that of BAG family molecular chaperone regulator 1 (BAG1) from Homo sapiens (Human).